The following is a 308-amino-acid chain: Autophagy-related protein 3 (308 aa).

The segment at 83-159 is flexible region; that stretch reads NFVETQTTET…NELADDDDDI (77 aa). Positions 89 to 121 are disordered; sequence TTETRDVGDGWELEGQSEGERESGREDTKSNEE. The segment covering 106 to 120 has biased composition (basic and acidic residues); sequence EGERESGREDTKSNE. The active-site Glycyl thioester intermediate is C235. Residues 239-283 form a handle region region; the sequence is NVMKVLMEKVRASRHRARDTEAQKNAEEDWEDLQSDIDDGLRVDQ.

This sequence belongs to the ATG3 family. Monomer. Interacts with ATG8 through an intermediate thioester bond between Cys-235 and the C-terminal Gly of ATG8. Interacts with the C-terminal region of the E1-like ATG7 enzyme. Also interacts with the ATG12-ATG5 conjugate.

The protein resides in the cytoplasm. In terms of biological role, E2 conjugating enzyme required for the cytoplasm to vacuole transport (Cvt) and autophagy. Required for selective autophagic degradation of the nucleus (nucleophagy) as well as for mitophagy which contributes to regulate mitochondrial quantity and quality by eliminating the mitochondria to a basal level to fulfill cellular energy requirements and preventing excess ROS production. Responsible for the E2-like covalent binding of phosphatidylethanolamine to the C-terminal Gly of ATG8. The ATG12-ATG5 conjugate plays a role of an E3 and promotes the transfer of ATG8 from ATG3 to phosphatidylethanolamine (PE). This step is required for the membrane association of ATG8. The formation of the ATG8-phosphatidylethanolamine conjugate is essential for autophagy and for the cytoplasm to vacuole transport (Cvt). The ATG8-PE conjugate mediates tethering between adjacent membranes and stimulates membrane hemifusion, leading to expansion of the autophagosomal membrane during autophagy. The polypeptide is Autophagy-related protein 3 (Kluyveromyces marxianus (strain DMKU3-1042 / BCC 29191 / NBRC 104275) (Yeast)).